The following is a 174-amino-acid chain: Thiol-disulfide oxidoreductase ResA (174 aa).

Residues 11 to 30 (TAILLVLLAAIGYTIYTNFF) traverse the membrane as a helical; Signal-anchor for type II membrane protein segment. The Thioredoxin domain maps to 36-174 (VAVGSTAPDF…IERHLESIKP (139 aa)). A disulfide bridge connects residues Cys-74 and Cys-77.

It belongs to the thioredoxin family. ResA subfamily.

The protein localises to the cell membrane. It functions in the pathway protein modification; cytochrome c assembly. Its function is as follows. Thiol-disulfide oxidoreductase which is required in disulfide reduction during c-type cytochrome synthesis. May accept reducing equivalents from CcdA, leading to breakage of disulfide bonds in apocytochrome c; following this reduction heme can be covalently attached. The polypeptide is Thiol-disulfide oxidoreductase ResA (Geobacillus kaustophilus (strain HTA426)).